Consider the following 92-residue polypeptide: Sperm-specific protein Phi-1 (92 aa).

Residues 1-92 (MPSPTRRSSK…RVRAKKKKKK (92 aa)) form a disordered region. Composition is skewed to basic residues over residues 7–19 (RSSKSRSKSRSRS) and 29–92 (AAKR…KKKK).

In terms of tissue distribution, sperm.

The protein localises to the nucleus. Its subcellular location is the chromosome. Functionally, involved in nuclear basic protein transition: histones are replaced by spermatid specific proteins which are themselves replaced by protamines in late spermatids. This chain is Sperm-specific protein Phi-1, found in Mytilus edulis (Blue mussel).